We begin with the raw amino-acid sequence, 475 residues long: Transmembrane protein 181 (475 aa).

A run of 9 helical transmembrane segments spans residues 16–36 (HFVL…FVGI), 131–151 (EIIV…IVGF), 175–195 (LEIW…CLFA), 214–234 (SVLL…SFLV), 245–265 (LFQS…YHGI), 276–296 (FYLP…TLGI), 320–340 (MKVF…FLIV), 356–376 (LKFL…ILYL), and 401–421 (FLSF…VYSP). Position 443 is a phosphoserine (serine 443).

The protein belongs to the TMEM181 family. In terms of assembly, interacts with cytolethal distending toxin.

The protein resides in the membrane. Mediates action of cytolethal distending toxins (CDT), which are secreted by many pathogenic bacteria. Expression level of TMEM181 is rate-limiting for intoxication. This Homo sapiens (Human) protein is Transmembrane protein 181 (TMEM181).